The following is a 76-amino-acid chain: uncharacterized protein (76 aa).

Residues methionine 1–proline 24 are disordered. Residues glycine 8–serine 22 are compositionally biased toward basic and acidic residues.

This is an uncharacterized protein from Dryophytes versicolor (chameleon treefrog).